A 422-amino-acid chain; its full sequence is Phosphoribosylamine--glycine ligase (422 aa).

One can recognise an ATP-grasp domain in the interval K107–D313. V133–S194 provides a ligand contact to ATP. Mg(2+) is bound by residues E283 and N285.

This sequence belongs to the GARS family. Requires Mg(2+) as cofactor. Mn(2+) serves as cofactor.

It carries out the reaction 5-phospho-beta-D-ribosylamine + glycine + ATP = N(1)-(5-phospho-beta-D-ribosyl)glycinamide + ADP + phosphate + H(+). It functions in the pathway purine metabolism; IMP biosynthesis via de novo pathway; N(1)-(5-phospho-D-ribosyl)glycinamide from 5-phospho-alpha-D-ribose 1-diphosphate: step 2/2. The polypeptide is Phosphoribosylamine--glycine ligase (Bacillus subtilis (strain 168)).